Consider the following 56-residue polypeptide: Large ribosomal subunit protein bL32 (56 aa).

Residues 1–16 show a composition bias toward basic residues; it reads MAVQKSKKSRAARGMR. The interval 1 to 22 is disordered; it reads MAVQKSKKSRAARGMRRSHDAL.

Belongs to the bacterial ribosomal protein bL32 family.

This Photobacterium profundum (strain SS9) protein is Large ribosomal subunit protein bL32.